The chain runs to 270 residues: Phosphatidate cytidylyltransferase (270 aa).

The next 7 helical transmembrane spans lie at 19–39 (LWLTWVGGVGFTLFSIAIGLA), 53–73 (TAFSRLFGWAWLIVTGILLIL), 76–96 (GALLTIGFLVAGCAILLVTQW), 101–121 (GWPAAGLFYAGFSALSLSLLR), 126–146 (FGFTTIVFLFAVVWSTDITAY), 183–203 (LVASLVAAPGGWGVPVLALLL), and 248–268 (ALLYLFGAIFAEPDVLSAIFF).

This sequence belongs to the CDS family.

The protein localises to the cell inner membrane. The enzyme catalyses a 1,2-diacyl-sn-glycero-3-phosphate + CTP + H(+) = a CDP-1,2-diacyl-sn-glycerol + diphosphate. It participates in phospholipid metabolism; CDP-diacylglycerol biosynthesis; CDP-diacylglycerol from sn-glycerol 3-phosphate: step 3/3. This Brucella abortus (strain 2308) protein is Phosphatidate cytidylyltransferase (cdsA).